The chain runs to 512 residues: NAD(P)H-quinone oxidoreductase subunit 2, organellar chromatophore (512 aa).

A run of 14 helical transmembrane segments spans residues 6–26 (LLALPLNAATIVPEGAILLAL), 43–63 (WVPPICYAGLGSALILLASQW), 80–100 (LAIAFRAIIATSTLFSLMISW), 107–127 (GAPMGEYAAILLAATLGAMFL), 133–153 (LVSIFVSLETLSVSSYLLAGY), 168–188 (LLVGSATAAVFLYGASLLYGL), 210–230 (AALALVFVLATVAFKIAAVPF), 242–262 (PTPIVAFLSVGSKTAGFALAL), 276–296 (WKFLFSLLAILSMVLGNIVAL), 304–324 (MLAYSSIGQAGFVMIGLVCGT), 332–352 (ILYLATYLFMNMGAFACVILF), 376–396 (IGLSLCLLSLGGIPPMLGFFG), 411–431 (LLVVTGLITSVVSIYYYISVI), and 464–484 (VALLVCVIVTGIGGIFSNPLF).

This sequence belongs to the complex I subunit 2 family. NDH-1 can be composed of about 15 different subunits; different subcomplexes with different compositions have been identified which probably have different functions.

It is found in the plastid. The protein localises to the organellar chromatophore thylakoid membrane. The enzyme catalyses a plastoquinone + NADH + (n+1) H(+)(in) = a plastoquinol + NAD(+) + n H(+)(out). It carries out the reaction a plastoquinone + NADPH + (n+1) H(+)(in) = a plastoquinol + NADP(+) + n H(+)(out). Its function is as follows. NDH-1 shuttles electrons from an unknown electron donor, via FMN and iron-sulfur (Fe-S) centers, to quinones in the respiratory and/or the photosynthetic chain. The immediate electron acceptor for the enzyme in this species is believed to be plastoquinone. Couples the redox reaction to proton translocation, and thus conserves the redox energy in a proton gradient. Cyanobacterial NDH-1 also plays a role in inorganic carbon-concentration. The chain is NAD(P)H-quinone oxidoreductase subunit 2, organellar chromatophore from Paulinella chromatophora.